A 915-amino-acid polypeptide reads, in one-letter code: MAPSSPSSARPTRASGRERSAMAEEIHQNQEEEEEVVAASTAKRRRKAASSGKKPKPTPKQAKPAVAGMKKKGETEKTEPVVDDVCAEEPDEEELAMGEEEAEAEEQAMQEVVAAVAAGSPGKKRVGRRSAAASGDHVPEFIGSPVGAAEAHSNWPKRYERSTAANKPEEDDELKARCHYRSAKVDNIVYCLGDDVYVKAGENEADYIGRITEFFEGTDRCHYFTCRWFFRAEDTVINSLVSINVDGHKHDPRRVFLSEEKNDNVLDCIISKVKIVHVDPNMDPKAKAQLIEHCDLYYDMSYSVAYSTFANISSENGQSGSETASGISSDDAGLETSSNMPERTATLLDLYSGCGGMSTGLCLGAALSGLKLETRWAVDLNSFACQSLKYNHPQTEVRNEKADEFLALLKEWAVLCEKYVHQDVDSNLAGSEDQEDADTLDKDEFVVQKLIGIRYDGTGRKKGVYFKVQWEEYGPEEDTWEPIDNLSDCPLKIREFVQEGRKRKILPLPGDVDVICGGPPCQGISGFNRFRNRDEPLKDEKNKQMVTFMDIVAYLKPKYVLMENVVDILKFADGYLGKYALSCLVAMKYQARLGMMVAGCYGLPQFRMRVFLWGALSSMVLPKYPLPTYDVVVRGGAPNAFSQCMVAYDETQRPSLKKALLLGDAFSDLPKVENHQPNDVMEYGGSPKTEFQRYIRLGRKDMLDWSFGEEAGPDEGKLLDHQPLRLNNDDYERVKQIPVKKGANFRDLKGVKVGANNVVEWDPEVERVYLSSGKPLVPDYAMSFIKGKSLKPFGRLWWDQTVPTVVTRAEPHNQVILHPTQARVLTIRENARLQGFPDYYRLFGPIKEKYIQVGNAVAVPVARALGYCLGQAYLGESDGSQPLYQLPASFTSVGRTAVQANAASVGTPAGEVVEQ.

The span at 1–14 (MAPSSPSSARPTRA) shows a compositional bias: low complexity. Positions 1–171 (MAPSSPSSAR…STAANKPEED (171 aa)) are disordered. The segment covering 15-30 (SGRERSAMAEEIHQNQ) has biased composition (basic and acidic residues). Positions 42–57 (AKRRRKAASSGKKPKP) are enriched in basic residues. A compositionally biased stretch (basic and acidic residues) spans 71–80 (KKGETEKTEP). A compositionally biased stretch (acidic residues) spans 81 to 108 (VVDDVCAEEPDEEELAMGEEEAEAEEQA). The segment covering 109 to 119 (MQEVVAAVAAG) has biased composition (low complexity). A BAH domain is found at 188–313 (IVYCLGDDVY…VAYSTFANIS (126 aa)). Over residues 315–328 (ENGQSGSETASGIS) the composition is skewed to polar residues. Residues 315 to 338 (ENGQSGSETASGISSDDAGLETSS) are disordered. In terms of domain architecture, SAM-dependent MTase C5-type spans 345 to 876 (ATLLDLYSGC…YCLGQAYLGE (532 aa)). The region spanning 445-508 (FVVQKLIGIR…EGRKRKILPL (64 aa)) is the Chromo domain. The active site involves Cys521.

This sequence belongs to the class I-like SAM-binding methyltransferase superfamily. C5-methyltransferase family.

It localises to the nucleus. It carries out the reaction a 2'-deoxycytidine in DNA + S-adenosyl-L-methionine = a 5-methyl-2'-deoxycytidine in DNA + S-adenosyl-L-homocysteine + H(+). In terms of biological role, may be involved in the CpXpG methylation and in gene silencing. The chain is DNA (cytosine-5)-methyltransferase 2 (ZMET5) from Zea mays (Maize).